The chain runs to 503 residues: Maturase K (503 aa).

Belongs to the intron maturase 2 family. MatK subfamily.

The protein resides in the plastid. It is found in the chloroplast. Usually encoded in the trnK tRNA gene intron. Probably assists in splicing its own and other chloroplast group II introns. The sequence is that of Maturase K from Rosa rugosa (Rugosa rose).